The primary structure comprises 1120 residues: ISWI chromatin-remodeling complex ATPase ISW2 (1120 aa).

Positions 1 to 16 (MTTQQEEQRSDTKNSK) are enriched in basic and acidic residues. Disordered regions lie at residues 1–58 (MTTQ…VEDR) and 129–153 (LSKSHSTVSSSSRHHRKTEKEEDAE). Serine 17 and serine 19 each carry phosphoserine. Residues 47 to 58 (LSDKEIYTVEDR) show a composition bias toward basic and acidic residues. Positions 196-361 (ISLHENKLSG…WALLNFLLPD (166 aa)) constitute a Helicase ATP-binding domain. 209–216 (DEMGLGKT) contacts ATP. Residues 312–315 (DEAH) carry the DEAH box motif. Residues 494–645 (ILDKLLKRLK…QLVIQQGTGK (152 aa)) enclose the Helicase C-terminal domain. Disordered regions lie at residues 764–783 (GGGSKSASKQTPQPKAPRAP) and 828–853 (NEGSDAEEEEGEYKNAANTEGHKGHE). Phosphoserine is present on serine 831. One can recognise an SANT domain in the interval 886–938 (KAFTNWNKRDFMAFINACAKYGRDDMENIKKSIDSKTPEEVEVYAKIFWERLK). Positions 1062–1120 (PDANKKKRSRTSATREDTPLSQNESTRASTVPNLPTTMVTNQKDTNDHVDKRTKIDQEA) are disordered. Threonine 1079 is modified (phosphothreonine). The segment covering 1080–1104 (PLSQNESTRASTVPNLPTTMVTNQK) has biased composition (polar residues). Serine 1082 carries the post-translational modification Phosphoserine. The span at 1105-1120 (DTNDHVDKRTKIDQEA) shows a compositional bias: basic and acidic residues.

This sequence belongs to the SNF2/RAD54 helicase family. ISWI subfamily. Component of the ISW2 complex, which at least consists of ISW2, ITC1, DLS1 and DPB4. May form a stable subcomplex with ITC1.

The protein localises to the nucleus. Its function is as follows. Catalytic component of the ISW2 complex, which acts in remodeling the chromatin by catalyzing an ATP-dependent alteration in the structure of nucleosomal DNA. The ISW2 complex is involved in coordinating transcriptional repression and in inheritance of telomeric silencing. It is involved in repression of MAT a-specific genes, INO1, and early meiotic genes during mitotic growth dependent upon transcription factor UME6 and in a parallel pathway to the RPD3-SIN3 histone deacetylase complex. In Saccharomyces cerevisiae (strain ATCC 204508 / S288c) (Baker's yeast), this protein is ISWI chromatin-remodeling complex ATPase ISW2 (ISW2).